The chain runs to 465 residues: UPF0422 protein CBU_0937 (465 aa).

The first 23 residues, 1–23 (MTSKLVISALGLCVSGALSTTLA), serve as a signal peptide directing secretion. A coiled-coil region spans residues 28-60 (TTNQQITKRIDYLQAQINELRTQQKKERQKKKA).

Belongs to the UPF0422 family.

The protein is UPF0422 protein CBU_0937 of Coxiella burnetii (strain RSA 493 / Nine Mile phase I).